We begin with the raw amino-acid sequence, 285 residues long: Probable endonuclease 4 (285 aa).

Residues His-69, His-109, Glu-145, Asp-179, His-182, His-216, Asp-229, His-231, and Glu-261 each contribute to the Zn(2+) site.

This sequence belongs to the AP endonuclease 2 family. Zn(2+) serves as cofactor.

The catalysed reaction is Endonucleolytic cleavage to 5'-phosphooligonucleotide end-products.. Its function is as follows. Endonuclease IV plays a role in DNA repair. It cleaves phosphodiester bonds at apurinic or apyrimidinic (AP) sites, generating a 3'-hydroxyl group and a 5'-terminal sugar phosphate. The chain is Probable endonuclease 4 from Salmonella agona (strain SL483).